The following is a 370-amino-acid chain: Cytochrome b (370 aa).

The next 4 membrane-spanning stretches (helical) occupy residues 25 to 45 (FGSM…FLAV), 69 to 90 (WLMQ…YIHI), 105 to 125 (WLSG…GYVL), and 170 to 190 (FFAL…LHVI). Residues His75 and His89 each contribute to the heme b site. Heme b contacts are provided by His174 and His188. His193 lines the a ubiquinone pocket. 4 consecutive transmembrane segments (helical) span residues 218–238 (YKDL…VSFS), 280–300 (LGGA…PFTH), 312–332 (FMQM…WTAT), and 339–358 (FTLI…ISNP).

The protein belongs to the cytochrome b family. The cytochrome bc1 complex contains 3 respiratory subunits (MT-CYB, CYC1 and UQCRFS1), 2 core proteins (UQCRC1 and UQCRC2) and probably 6 low-molecular weight proteins. The cofactor is heme b.

Its subcellular location is the mitochondrion inner membrane. Functionally, component of the ubiquinol-cytochrome c reductase complex (complex III or cytochrome b-c1 complex) that is part of the mitochondrial respiratory chain. The b-c1 complex mediates electron transfer from ubiquinol to cytochrome c. Contributes to the generation of a proton gradient across the mitochondrial membrane that is then used for ATP synthesis. The sequence is that of Cytochrome b (MT-CYB) from Eunectes murinus (Green anaconda).